The primary structure comprises 156 residues: ATP synthase subunit b (156 aa).

Residues 5–25 (LTMIGQAIAFFIFVVFCMKYV) form a helical membrane-spanning segment.

This sequence belongs to the ATPase B chain family. As to quaternary structure, F-type ATPases have 2 components, F(1) - the catalytic core - and F(0) - the membrane proton channel. F(1) has five subunits: alpha(3), beta(3), gamma(1), delta(1), epsilon(1). F(0) has three main subunits: a(1), b(2) and c(10-14). The alpha and beta chains form an alternating ring which encloses part of the gamma chain. F(1) is attached to F(0) by a central stalk formed by the gamma and epsilon chains, while a peripheral stalk is formed by the delta and b chains.

It localises to the cell inner membrane. F(1)F(0) ATP synthase produces ATP from ADP in the presence of a proton or sodium gradient. F-type ATPases consist of two structural domains, F(1) containing the extramembraneous catalytic core and F(0) containing the membrane proton channel, linked together by a central stalk and a peripheral stalk. During catalysis, ATP synthesis in the catalytic domain of F(1) is coupled via a rotary mechanism of the central stalk subunits to proton translocation. Its function is as follows. Component of the F(0) channel, it forms part of the peripheral stalk, linking F(1) to F(0). In Hahella chejuensis (strain KCTC 2396), this protein is ATP synthase subunit b.